The sequence spans 247 residues: ATP synthase subunit a, chloroplastic (247 aa).

A run of 5 helical transmembrane segments spans residues 38–58 (QVLI…ILII), 95–115 (VPFI…GALL), 134–154 (INTT…AGLS), 199–219 (LVVV…VMFL), and 220–240 (GLFT…AYIG).

The protein belongs to the ATPase A chain family. F-type ATPases have 2 components, CF(1) - the catalytic core - and CF(0) - the membrane proton channel. CF(1) has five subunits: alpha(3), beta(3), gamma(1), delta(1), epsilon(1). CF(0) has four main subunits: a, b, b' and c.

The protein resides in the plastid. Its subcellular location is the chloroplast thylakoid membrane. In terms of biological role, key component of the proton channel; it plays a direct role in the translocation of protons across the membrane. This is ATP synthase subunit a, chloroplastic from Glycine max (Soybean).